Here is a 594-residue protein sequence, read N- to C-terminus: Adenine deaminase 1 (594 aa).

The protein belongs to the metallo-dependent hydrolases superfamily. Adenine deaminase family. It depends on Mn(2+) as a cofactor.

It catalyses the reaction adenine + H2O + H(+) = hypoxanthine + NH4(+). The polypeptide is Adenine deaminase 1 (Desulfotalea psychrophila (strain LSv54 / DSM 12343)).